The chain runs to 104 residues: L-rhamnose mutarotase (104 aa).

Substrate is bound at residue Tyr18. The active-site Proton donor is the His22. Residues Tyr41 and 76–77 (WW) contribute to the substrate site.

This sequence belongs to the rhamnose mutarotase family. As to quaternary structure, homodimer.

It is found in the cytoplasm. The catalysed reaction is alpha-L-rhamnose = beta-L-rhamnose. Its pathway is carbohydrate metabolism; L-rhamnose metabolism. Functionally, involved in the anomeric conversion of L-rhamnose. The polypeptide is L-rhamnose mutarotase (Clostridium beijerinckii (strain ATCC 51743 / NCIMB 8052) (Clostridium acetobutylicum)).